The primary structure comprises 431 residues: Homeobox protein knotted-1-like 3 (431 aa).

Residues 15 to 47 (NHFTDQHQPPPPQPPPPPPQQQQHFQEAPPPNW) are disordered. Residues 22-34 (QPPPPQPPPPPPQ) show a composition bias toward pro residues. One can recognise an ELK domain in the interval 322 to 342 (ELKHELKQGYKEKIVDIREEI). Positions 343-406 (LRKRRAGKLP…NQRKRNWHSN (64 aa)) form a DNA-binding region, homeobox; TALE-type. Positions 402–431 (NWHSNPSSSTVLKNKRKSNAGDNSGRERFA) are disordered. The segment covering 404 to 413 (HSNPSSSTVL) has biased composition (polar residues).

It belongs to the TALE/KNOX homeobox family. In terms of assembly, may form heterodimeric complex with the TALE/BELL proteins. Interacts with OFP1, OFP2, OFP4, OFP12 and OFP14. Interacts with KNATM-B.

It is found in the nucleus. The polypeptide is Homeobox protein knotted-1-like 3 (KNAT3) (Arabidopsis thaliana (Mouse-ear cress)).